The primary structure comprises 196 residues: Pyridoxal 5'-phosphate synthase subunit PdxT (196 aa).

52–54 (GES) is an L-glutamine binding site. The active-site Nucleophile is cysteine 84. L-glutamine is bound by residues arginine 113 and 141 to 142 (IR). Residues histidine 178 and glutamate 180 each act as charge relay system in the active site.

This sequence belongs to the glutaminase PdxT/SNO family. In the presence of PdxS, forms a dodecamer of heterodimers. Only shows activity in the heterodimer.

It carries out the reaction aldehydo-D-ribose 5-phosphate + D-glyceraldehyde 3-phosphate + L-glutamine = pyridoxal 5'-phosphate + L-glutamate + phosphate + 3 H2O + H(+). The enzyme catalyses L-glutamine + H2O = L-glutamate + NH4(+). The protein operates within cofactor biosynthesis; pyridoxal 5'-phosphate biosynthesis. Catalyzes the hydrolysis of glutamine to glutamate and ammonia as part of the biosynthesis of pyridoxal 5'-phosphate. The resulting ammonia molecule is channeled to the active site of PdxS. The polypeptide is Pyridoxal 5'-phosphate synthase subunit PdxT (Pyrococcus abyssi (strain GE5 / Orsay)).